We begin with the raw amino-acid sequence, 267 residues long: Small ribosomal subunit protein uS2 (267 aa).

The tract at residues 1–72 is disordered; the sequence is MSGNEKEGLD…QLDEDVMPDE (72 aa). Acidic residues predominate over residues 10-72; the sequence is DASDSDFDPS…QLDEDVMPDE (63 aa).

Belongs to the universal ribosomal protein uS2 family. In terms of processing, the N-terminus is blocked.

This chain is Small ribosomal subunit protein uS2 (rps2), found in Haloarcula marismortui (strain ATCC 43049 / DSM 3752 / JCM 8966 / VKM B-1809) (Halobacterium marismortui).